Reading from the N-terminus, the 758-residue chain is Relaxin receptor 1 (758 aa).

At methionine 1–glutamine 408 the chain is on the extracellular side. Residues serine 26–glycine 63 form the LDL-receptor class A domain. Intrachain disulfides connect cysteine 27/cysteine 40, cysteine 34/cysteine 53, and cysteine 47/cysteine 62. N-linked (GlcNAc...) asparagine glycosylation is present at asparagine 36. Positions 45, 48, 50, 52, 58, and 59 each coordinate Ca(2+). 11 LRR repeats span residues leucine 105–serine 125, serine 126–lysine 148, tyrosine 149–glycine 172, leucine 173–aspartate 196, histidine 198–glycine 220, leucine 221–glutamine 244, methionine 246–serine 269, cysteine 270–histidine 293, leucine 294–aspartate 317, lysine 319–tyrosine 341, and leucine 342–proline 365. An N-linked (GlcNAc...) asparagine glycan is attached at asparagine 127. N-linked (GlcNAc...) asparagine glycosylation is found at asparagine 264 and asparagine 272. Residue asparagine 325 is glycosylated (N-linked (GlcNAc...) asparagine). Asparagine 368 is a glycosylation site (N-linked (GlcNAc...) asparagine). Residues arginine 409–methionine 429 traverse the membrane as a helical segment. The Cytoplasmic segment spans residues arginine 430–serine 443. The chain crosses the membrane as a helical span at residues isoleucine 444–phenylalanine 464. At aspartate 465–glutamine 486 the chain is on the extracellular side. Cysteine 485 and cysteine 563 are oxidised to a cystine. A helical membrane pass occupies residues phenylalanine 487–threonine 507. Over leucine 508–arginine 527 the chain is Cytoplasmic. A helical membrane pass occupies residues threonine 528–glycine 548. At asparagine 549–glutamine 577 the chain is on the extracellular side. A helical transmembrane segment spans residues isoleucine 578–serine 598. Residues tyrosine 599–arginine 629 lie on the Cytoplasmic side of the membrane. The chain crosses the membrane as a helical span at residues phenylalanine 630–leucine 650. Residues serine 651–threonine 660 lie on the Extracellular side of the membrane. A helical membrane pass occupies residues isoleucine 661–tyrosine 681. At threonine 682–serine 758 the chain is on the cytoplasmic side.

Belongs to the G-protein coupled receptor 1 family. In terms of assembly, interacts with C1QTNF8. As to expression, detected in brain cortex, and at low levels in testis.

Its subcellular location is the cell membrane. Functionally, receptor for relaxins. The activity of this receptor is mediated by G proteins leading to stimulation of adenylate cyclase and an increase of cAMP. Binding of the ligand may also activate a tyrosine kinase pathway that inhibits the activity of a phosphodiesterase that degrades cAMP. The protein is Relaxin receptor 1 (Rxfp1) of Rattus norvegicus (Rat).